Consider the following 290-residue polypeptide: 4-diphosphocytidyl-2-C-methyl-D-erythritol kinase (290 aa).

Lys-10 is an active-site residue. 96–106 contributes to the ATP binding site; the sequence is PIAAGLGGGSS. Residue Asp-138 is part of the active site.

This sequence belongs to the GHMP kinase family. IspE subfamily.

The enzyme catalyses 4-CDP-2-C-methyl-D-erythritol + ATP = 4-CDP-2-C-methyl-D-erythritol 2-phosphate + ADP + H(+). Its pathway is isoprenoid biosynthesis; isopentenyl diphosphate biosynthesis via DXP pathway; isopentenyl diphosphate from 1-deoxy-D-xylulose 5-phosphate: step 3/6. Functionally, catalyzes the phosphorylation of the position 2 hydroxy group of 4-diphosphocytidyl-2C-methyl-D-erythritol. The protein is 4-diphosphocytidyl-2-C-methyl-D-erythritol kinase of Caulobacter vibrioides (strain NA1000 / CB15N) (Caulobacter crescentus).